We begin with the raw amino-acid sequence, 349 residues long: GDSL esterase/lipase At2g19050 (349 aa).

The signal sequence occupies residues 1–23 (MAEAIFKALLLVIATTAFATTEA). The active-site Nucleophile is S38. N49 carries an N-linked (GlcNAc...) asparagine glycan. Catalysis depends on residues D316 and H319.

It belongs to the 'GDSL' lipolytic enzyme family.

The protein localises to the secreted. This Arabidopsis thaliana (Mouse-ear cress) protein is GDSL esterase/lipase At2g19050.